The sequence spans 346 residues: [LysW]-lysine/[LysW]-ornithine hydrolase (346 aa).

H68 lines the Zn(2+) pocket. D70 is an active-site residue. D92 contributes to the Zn(2+) binding site. E122 (proton acceptor) is an active-site residue. E123, E146, and H317 together coordinate Zn(2+).

Belongs to the peptidase M20A family. LysK subfamily. Requires Zn(2+) as cofactor. Co(2+) serves as cofactor.

Its subcellular location is the cytoplasm. It catalyses the reaction [amino-group carrier protein]-C-terminal-gamma-(L-lysyl)-L-glutamate + H2O = [amino-group carrier protein]-C-terminal-L-glutamate + L-lysine. The enzyme catalyses [amino-group carrier protein]-C-terminal-gamma-(L-ornithyl)-L-glutamate + H2O = [amino-group carrier protein]-C-terminal-L-glutamate + L-ornithine. Its pathway is amino-acid biosynthesis; L-lysine biosynthesis via AAA pathway; L-lysine from L-alpha-aminoadipate (Thermus route): step 5/5. The protein operates within amino-acid biosynthesis; L-arginine biosynthesis. Its function is as follows. Catalyzes the release of L-lysine from [LysW]-gamma-L-lysine and the release of L-ornithine from [LysW]-L-ornithine. The polypeptide is [LysW]-lysine/[LysW]-ornithine hydrolase (Saccharolobus islandicus (strain Y.G.57.14 / Yellowstone #1) (Sulfolobus islandicus)).